We begin with the raw amino-acid sequence, 172 residues long: Large ribosomal subunit protein uL10 (172 aa).

It belongs to the universal ribosomal protein uL10 family. Part of the ribosomal stalk of the 50S ribosomal subunit. The N-terminus interacts with L11 and the large rRNA to form the base of the stalk. The C-terminus forms an elongated spine to which L12 dimers bind in a sequential fashion forming a multimeric L10(L12)X complex.

In terms of biological role, forms part of the ribosomal stalk, playing a central role in the interaction of the ribosome with GTP-bound translation factors. The chain is Large ribosomal subunit protein uL10 from Macrococcus caseolyticus (strain JCSC5402) (Macrococcoides caseolyticum).